We begin with the raw amino-acid sequence, 347 residues long: Phosphoribosylformylglycinamidine cyclo-ligase (347 aa).

The protein belongs to the AIR synthase family.

It is found in the cytoplasm. It carries out the reaction 2-formamido-N(1)-(5-O-phospho-beta-D-ribosyl)acetamidine + ATP = 5-amino-1-(5-phospho-beta-D-ribosyl)imidazole + ADP + phosphate + H(+). Its pathway is purine metabolism; IMP biosynthesis via de novo pathway; 5-amino-1-(5-phospho-D-ribosyl)imidazole from N(2)-formyl-N(1)-(5-phospho-D-ribosyl)glycinamide: step 2/2. This chain is Phosphoribosylformylglycinamidine cyclo-ligase, found in Yersinia pseudotuberculosis serotype IB (strain PB1/+).